Here is a 295-residue protein sequence, read N- to C-terminus: Putative NADH-ubiquinone oxidoreductase MJ0520 (295 aa).

A run of 8 helical transmembrane segments spans residues 8 to 28 (LIGAINLTIHAFLVGSLLLGL), 69 to 89 (LYIFVALLDIAIWLAALIIAI), 129 to 149 (VFSAAAEVPLFAVVAAIYLTT), 163 to 183 (IHGSLLFKMPICAFAFFILLV), 199 to 219 (IVSGYMTEHYGLLGAIIYIAE), 220 to 240 (AIAYFVLLWLFIAVFIGPLVI), 243 to 263 (PVLTLAVMVVMTVILAFVNGL), and 273 to 293 (VMLQMTIAGLVLCDVLYRLIV).

The protein belongs to the complex I subunit 1 family.

It localises to the cell membrane. The enzyme catalyses a ubiquinone + NADH + 5 H(+)(in) = a ubiquinol + NAD(+) + 4 H(+)(out). The chain is Putative NADH-ubiquinone oxidoreductase MJ0520 from Methanocaldococcus jannaschii (strain ATCC 43067 / DSM 2661 / JAL-1 / JCM 10045 / NBRC 100440) (Methanococcus jannaschii).